Reading from the N-terminus, the 623-residue chain is Chaperone protein HtpG (623 aa).

The interval 1-328 is a; substrate-binding; the sequence is MTQEKKKFDA…SEDLPLNISR (328 aa). Residues 329–544 are b; the sequence is ESLQHNSILD…ESAMDIRMER (216 aa). The segment at 545-623 is c; the sequence is FLIEQKQIAN…DIVQKAILSL (79 aa).

This sequence belongs to the heat shock protein 90 family. Homodimer.

The protein localises to the cytoplasm. Functionally, molecular chaperone. Has ATPase activity. The polypeptide is Chaperone protein HtpG (Rickettsia canadensis (strain McKiel)).